Consider the following 663-residue polypeptide: Rho GTPase-activating protein 18 (663 aa).

Disordered stretches follow at residues alanine 14–methionine 73 and arginine 85–glutamate 106. The span at serine 27–serine 37 shows a compositional bias: basic and acidic residues. Over residues serine 38–serine 51 the composition is skewed to polar residues. Serine 65 and serine 68 each carry phosphoserine. Residues arginine 85–proline 102 are compositionally biased toward basic and acidic residues. Threonine 156 carries the phosphothreonine modification. 2 disordered regions span residues phenylalanine 173 to glutamate 228 and lysine 245 to glycine 277. Basic and acidic residues-rich tracts occupy residues glutamate 178–glutamine 205 and aspartate 212–glutamate 222. Phosphoserine occurs at positions 260 and 263. Residues isoleucine 324 to tryptophan 523 enclose the Rho-GAP domain. Serine 610 is subject to Phosphoserine.

Interacts with MPHOSPH6. In terms of tissue distribution, widely expressed: expressed in most organs, except small intestine.

The protein localises to the cytoplasm. Rho GTPase activating protein that suppresses F-actin polymerization by inhibiting Rho. Rho GTPase activating proteins act by converting Rho-type GTPases to an inactive GDP-bound state. Plays a key role in tissue tension and 3D tissue shape by regulating cortical actomyosin network formation. Acts downstream of YAP1 and inhibits actin polymerization, which in turn reduces nuclear localization of YAP1. Regulates cell shape, spreading, and migration. This Mus musculus (Mouse) protein is Rho GTPase-activating protein 18.